The following is a 173-amino-acid chain: Acireductone dioxygenase 1 (173 aa).

Positions 96, 98, 102, and 140 each coordinate Fe(2+). Ni(2+) contacts are provided by histidine 96, histidine 98, glutamate 102, and histidine 140.

Belongs to the acireductone dioxygenase (ARD) family. Monomer. The cofactor is Fe(2+). Ni(2+) serves as cofactor.

The enzyme catalyses 1,2-dihydroxy-5-(methylsulfanyl)pent-1-en-3-one + O2 = 3-(methylsulfanyl)propanoate + CO + formate + 2 H(+). It catalyses the reaction 1,2-dihydroxy-5-(methylsulfanyl)pent-1-en-3-one + O2 = 4-methylsulfanyl-2-oxobutanoate + formate + 2 H(+). It functions in the pathway amino-acid biosynthesis; L-methionine biosynthesis via salvage pathway; L-methionine from S-methyl-5-thio-alpha-D-ribose 1-phosphate: step 5/6. Functionally, catalyzes 2 different reactions between oxygen and the acireductone 1,2-dihydroxy-3-keto-5-methylthiopentene (DHK-MTPene) depending upon the metal bound in the active site. Fe-containing acireductone dioxygenase (Fe-ARD) produces formate and 2-keto-4-methylthiobutyrate (KMTB), the alpha-ketoacid precursor of methionine in the methionine recycle pathway. Ni-containing acireductone dioxygenase (Ni-ARD) produces methylthiopropionate, carbon monoxide and formate, and does not lie on the methionine recycle pathway. This chain is Acireductone dioxygenase 1, found in Pectobacterium atrosepticum (strain SCRI 1043 / ATCC BAA-672) (Erwinia carotovora subsp. atroseptica).